We begin with the raw amino-acid sequence, 486 residues long: uncharacterized protein (486 aa).

Belongs to the UbiD family.

This is an uncharacterized protein from Aquifex aeolicus (strain VF5).